Reading from the N-terminus, the 212-residue chain is Guanylate kinase (212 aa).

One can recognise a Guanylate kinase-like domain in the interval 5-187; it reads GILCIISAPS…ALMHLQSIML (183 aa). 12-19 is a binding site for ATP; it reads APSGTGKS.

Belongs to the guanylate kinase family.

The protein localises to the cytoplasm. The enzyme catalyses GMP + ATP = GDP + ADP. Essential for recycling GMP and indirectly, cGMP. This chain is Guanylate kinase, found in Blochmanniella pennsylvanica (strain BPEN).